The following is a 199-amino-acid chain: FMN-dependent NADH:quinone oxidoreductase 1 (199 aa).

FMN-binding positions include Ser10, 17 to 19 (SNS), and 87 to 90 (MYNF).

The protein belongs to the azoreductase type 1 family. Homodimer. FMN serves as cofactor.

The catalysed reaction is 2 a quinone + NADH + H(+) = 2 a 1,4-benzosemiquinone + NAD(+). The enzyme catalyses N,N-dimethyl-1,4-phenylenediamine + anthranilate + 2 NAD(+) = 2-(4-dimethylaminophenyl)diazenylbenzoate + 2 NADH + 2 H(+). Quinone reductase that provides resistance to thiol-specific stress caused by electrophilic quinones. In terms of biological role, also exhibits azoreductase activity. Catalyzes the reductive cleavage of the azo bond in aromatic azo compounds to the corresponding amines. The protein is FMN-dependent NADH:quinone oxidoreductase 1 of Mesoplasma florum (strain ATCC 33453 / NBRC 100688 / NCTC 11704 / L1) (Acholeplasma florum).